The chain runs to 339 residues: MRVYYDRDADLNLIKSKKVAIIGYGSQGRAHALNLKDSGAQNVAIALKSGSATAKKAEADGFKVMTVAEAAAWADLMMMATPDELQADIYKADIAGNIRDGAAIAFAHGLNVHFGLIEPKASVDVVMIAPKGPGHTVRGEYQKGGGVPCLVAVHQDASGNALDLALSYACGVGGGRSGIIETNFKEECETDLFGEQVVLCGGLVELIRAGFETLVEAGYAPEMAYFECLHEVKLIVDLIYEGGIANMNYSISNTAEWGEYVTGPRIITEDTKAEMKRVLKDIQTGKFTSEWMQEYRSGAARFKGIRRVNDSHQIEEVGAKLRAMMPWIGKNKLVDKAKN.

The KARI N-terminal Rossmann domain occupies 1–182; that stretch reads MRVYYDRDAD…GGGRSGIIET (182 aa). Residues 24-27, Lys-48, Ser-51, Thr-53, and 83-86 each bind NADP(+); these read YGSQ and DELQ. The active site involves His-108. Residue Gly-134 participates in NADP(+) binding. The 146-residue stretch at 183–328 folds into the KARI C-terminal knotted domain; the sequence is NFKEECETDL…AKLRAMMPWI (146 aa). 4 residues coordinate Mg(2+): Asp-191, Glu-195, Glu-227, and Glu-231. Position 252 (Ser-252) interacts with substrate.

Belongs to the ketol-acid reductoisomerase family. Requires Mg(2+) as cofactor.

The catalysed reaction is (2R)-2,3-dihydroxy-3-methylbutanoate + NADP(+) = (2S)-2-acetolactate + NADPH + H(+). It carries out the reaction (2R,3R)-2,3-dihydroxy-3-methylpentanoate + NADP(+) = (S)-2-ethyl-2-hydroxy-3-oxobutanoate + NADPH + H(+). Its pathway is amino-acid biosynthesis; L-isoleucine biosynthesis; L-isoleucine from 2-oxobutanoate: step 2/4. The protein operates within amino-acid biosynthesis; L-valine biosynthesis; L-valine from pyruvate: step 2/4. Functionally, involved in the biosynthesis of branched-chain amino acids (BCAA). Catalyzes an alkyl-migration followed by a ketol-acid reduction of (S)-2-acetolactate (S2AL) to yield (R)-2,3-dihydroxy-isovalerate. In the isomerase reaction, S2AL is rearranged via a Mg-dependent methyl migration to produce 3-hydroxy-3-methyl-2-ketobutyrate (HMKB). In the reductase reaction, this 2-ketoacid undergoes a metal-dependent reduction by NADPH to yield (R)-2,3-dihydroxy-isovalerate. This chain is Ketol-acid reductoisomerase (NADP(+)), found in Rhizobium meliloti (strain 1021) (Ensifer meliloti).